The primary structure comprises 880 residues: MVYPGPPGLIAGLLLAALSLSCVDGAKALGFVGHGYNLTVSQGHEAKLNCSLQGIEEPEIQWLKDGVPVQSADQMYIPVDEDHWISFLSLKNVERPDAGKYWCEAEHSGRKSVSDAIWIMVEGVPYFTLEPKDLSVTPNSPFNMTCAAVGPPEPLVIIWWVGDSPLGKSESSPSVLQMSGIHERTAFSCEAHNAKGVSSSRTAIVEVKGLPYPPFNVTISKVTGSTATVTWFPGFNSFSLIKSCTIQVQSLHGNREMYSRLISAPPFAVLLDELQPLTNHSVRVQCTNEMGASPFTEWRTFHTKETVPQLLPQNVHMTKTETSLLLDWEEVEPDREGYNILGFKVQWEQENATQGELFVQENQANLTKWNPEKDLTIRICIANAAGCGPWSEFLLAGSKEEAGKQRHPHTRMSWVPMVLGILTALVTVVAMTLIFLRKGRKETRFGNMLGSMLGRGGPVIQFTAARSFNRRGPEMMEATLDSIGISEELKSKLKDVLIQQQQFTLGRTLGKGEFGSVREAQLKMEDDTMQKVAVKMLKAEIFCSSDIEEFLREAAFMKEFDHPNVCKLIGVSLRSRTKGRLPVPMVILPFMKHGDLHTFLLMSRIGEEPITLPVQTLVRFMIDICSGMEYLSSKNFIHRDLATRNCMLNEDMTVCVADFGLSKKIYSGDYYRQGCASKLPVKWLALESLADNVYTVHSDVWAFGVTLWEIATLGQTPYAGVENSEIYSYLIAGNRLKQPLDCLDELYEMMCQCWITEPKRRPSFVDLKQRLEAIWGRLSILSASQDQLYVNLGETCGAAAAVSGLHSAFCSEEDYCAGPSQTCGTSAITSDYRYIVNPGCLREGNEWSSSAQNGEARGLLHEEEEEEEEEMQEEQVVITL.

Residues 1-28 (MVYPGPPGLIAGLLLAALSLSCVDGAKA) form the signal peptide. Ig-like C2-type domains follow at residues 29-114 (LGFV…KSVS) and 125-206 (PYFT…AIVE). The Extracellular segment spans residues 29–414 (LGFVGHGYNL…QRHPHTRMSW (386 aa)). 2 N-linked (GlcNAc...) asparagine glycosylation sites follow: asparagine 37 and asparagine 49. Cysteine 50 and cysteine 103 form a disulfide bridge. The N-linked (GlcNAc...) asparagine glycan is linked to asparagine 143. Cysteine 146 and cysteine 189 are oxidised to a cystine. Fibronectin type-III domains follow at residues 213–306 (PPFN…TKET) and 311–401 (LPQN…SKEE). 4 N-linked (GlcNAc...) asparagine glycosylation sites follow: asparagine 216, asparagine 279, asparagine 351, and asparagine 365. The helical transmembrane segment at 415 to 435 (VPMVLGILTALVTVVAMTLIF) threads the bilayer. The Cytoplasmic portion of the chain corresponds to 436 to 880 (LRKGRKETRF…MQEEQVVITL (445 aa)). Residues 503-774 (FTLGRTLGKG…VDLKQRLEAI (272 aa)) enclose the Protein kinase domain. ATP-binding positions include 509-517 (LGKGEFGSV) and lysine 535. The Proton acceptor role is filled by aspartate 640. Residue tyrosine 671 is modified to Phosphotyrosine; by autocatalysis. A disordered region spans residues 846–880 (EWSSSAQNGEARGLLHEEEEEEEEEMQEEQVVITL). The segment covering 862–873 (EEEEEEEEEMQE) has biased composition (acidic residues).

The protein belongs to the protein kinase superfamily. Tyr protein kinase family. AXL/UFO subfamily. Tyrosine phosphorylated upon receptor stimulation. As to expression, detected in brain, spinal cord, intestine, lung, stomach, ovary, testis, skin and eye.

It is found in the cell membrane. It catalyses the reaction L-tyrosyl-[protein] + ATP = O-phospho-L-tyrosyl-[protein] + ADP + H(+). Its function is as follows. May be involved in cell adhesion processes, particularly in the central nervous system. This chain is Tyrosine-protein kinase receptor TYRO3 (tyro3), found in Xenopus laevis (African clawed frog).